The chain runs to 361 residues: MIPTARCGALRQKIPVQAVRQYSSSTTLKTSPFAPRHLLSIADLTPTEFTTLVRNASSHKHSIKSGSIPTNLQGSLAGKTVAMMFSKRSTRTRISTEGATVQLGGHPMFLGKDDIQLGVNESLYDTAVVVSSMVSAIVARVGKHAEVADLAKHSTVPVINALCDSFHPLQAIADFQTIYETFTPKAHHLSSLGLEGLKIAWVGDANNVLFDMAISAAKMGVDLAVATPKGYEIPASMRELIQEAGKGVANPGKLIQTNVPEEAVKKADILVTDTWVSMGQEEESLKRMKAFEGFQITSELAKRGGANENWKFMHCLPRHPEEVSDEVFYSNRSLVFPEAENRLWAAISALEGFVVNKGKIA.

A mitochondrion-targeting transit peptide spans 1-24 (MIPTARCGALRQKIPVQAVRQYSS). Residues 89-92 (STRT), arginine 140, histidine 167, and glutamine 170 each bind carbamoyl phosphate. L-ornithine contacts are provided by asparagine 207, aspartate 273, serine 277, and methionine 278. Catalysis depends on cysteine 315, which acts as the Proton acceptor. Carbamoyl phosphate is bound by residues 315 to 316 (CL) and arginine 342.

The protein belongs to the aspartate/ornithine carbamoyltransferase superfamily. OTCase family. As to quaternary structure, homotrimer.

The protein resides in the mitochondrion matrix. It carries out the reaction carbamoyl phosphate + L-ornithine = L-citrulline + phosphate + H(+). It participates in amino-acid biosynthesis; L-arginine biosynthesis; L-arginine from L-ornithine and carbamoyl phosphate: step 1/3. In Aspergillus terreus, this protein is Ornithine carbamoyltransferase, mitochondrial (arg1).